Consider the following 104-residue polypeptide: Iron-sulfur cluster assembly protein CyaY (104 aa).

It belongs to the frataxin family.

In terms of biological role, involved in iron-sulfur (Fe-S) cluster assembly. May act as a regulator of Fe-S biogenesis. The polypeptide is Iron-sulfur cluster assembly protein CyaY (Aeromonas salmonicida (strain A449)).